We begin with the raw amino-acid sequence, 279 residues long: Orotidine 5'-phosphate decarboxylase (279 aa).

Substrate is bound by residues Asp8, Lys30, 58–67 (DLKFHDIPNT), Thr117, Arg177, Gln186, Gly206, and Arg207. The Proton donor role is filled by Lys60.

The protein belongs to the OMP decarboxylase family. Type 1 subfamily. Homodimer.

The catalysed reaction is orotidine 5'-phosphate + H(+) = UMP + CO2. The protein operates within pyrimidine metabolism; UMP biosynthesis via de novo pathway; UMP from orotate: step 2/2. Catalyzes the decarboxylation of orotidine 5'-monophosphate (OMP) to uridine 5'-monophosphate (UMP). The polypeptide is Orotidine 5'-phosphate decarboxylase (Campylobacter jejuni subsp. jejuni serotype O:2 (strain ATCC 700819 / NCTC 11168)).